Consider the following 292-residue polypeptide: Tubulin beta chain (292 aa).

Residues Asn49 and Asn71 each coordinate GTP. Residues 265-292 (SEYQQYQDATAEEEGEFDEEEEGDEEAA) form a disordered region. Acidic residues predominate over residues 274 to 292 (TAEEEGEFDEEEEGDEEAA).

It belongs to the tubulin family. Dimer of alpha and beta chains. A typical microtubule is a hollow water-filled tube with an outer diameter of 25 nm and an inner diameter of 15 nM. Alpha-beta heterodimers associate head-to-tail to form protofilaments running lengthwise along the microtubule wall with the beta-tubulin subunit facing the microtubule plus end conferring a structural polarity. Microtubules usually have 13 protofilaments but different protofilament numbers can be found in some organisms and specialized cells. Mg(2+) is required as a cofactor.

It is found in the cytoplasm. Its subcellular location is the cytoskeleton. Functionally, tubulin is the major constituent of microtubules, a cylinder consisting of laterally associated linear protofilaments composed of alpha- and beta-tubulin heterodimers. Microtubules grow by the addition of GTP-tubulin dimers to the microtubule end, where a stabilizing cap forms. Below the cap, tubulin dimers are in GDP-bound state, owing to GTPase activity of alpha-tubulin. The protein is Tubulin beta chain of Strongylocentrotus purpuratus (Purple sea urchin).